The following is a 261-amino-acid chain: tRNA pseudouridine synthase A (261 aa).

Residue Asp51 is the Nucleophile of the active site. Tyr109 is a substrate binding site.

The protein belongs to the tRNA pseudouridine synthase TruA family. As to quaternary structure, homodimer.

It carries out the reaction uridine(38/39/40) in tRNA = pseudouridine(38/39/40) in tRNA. Functionally, formation of pseudouridine at positions 38, 39 and 40 in the anticodon stem and loop of transfer RNAs. This is tRNA pseudouridine synthase A from Haemophilus ducreyi (strain 35000HP / ATCC 700724).